A 207-amino-acid polypeptide reads, in one-letter code: MSDAALPIQASPEADILSALGARSIVLVGMMGVGKSTIGRRMAARLKLPFVDADTEIEAAAGMTIPEIFERHGEGHFRDGEARVIARLLDGGPVVLATGGGAFMREETRARIAAKAVSIWLKADHDVIMRRVRRRADRPLLQTADPEGTVTRLLTEREPVYSHADLTIASRDVPHDKIVEECIETLRAHLCGEQAAQPPADVASAVR.

Position 32–37 (32–37 (GVGKST)) interacts with ATP. S36 serves as a coordination point for Mg(2+). Substrate-binding residues include D54, R78, and G100. ATP is bound at residue R138. Residue R157 coordinates substrate.

Belongs to the shikimate kinase family. Monomer. It depends on Mg(2+) as a cofactor.

The protein localises to the cytoplasm. It catalyses the reaction shikimate + ATP = 3-phosphoshikimate + ADP + H(+). It functions in the pathway metabolic intermediate biosynthesis; chorismate biosynthesis; chorismate from D-erythrose 4-phosphate and phosphoenolpyruvate: step 5/7. Its function is as follows. Catalyzes the specific phosphorylation of the 3-hydroxyl group of shikimic acid using ATP as a cosubstrate. This is Shikimate kinase from Bradyrhizobium diazoefficiens (strain JCM 10833 / BCRC 13528 / IAM 13628 / NBRC 14792 / USDA 110).